The following is a 506-amino-acid chain: Protein MGF 505-9R (506 aa).

ANK repeat units lie at residues 54 to 83 (PTHK…SLQY), 253 to 283 (QVDT…ETVE), and 313 to 343 (FVKK…KINL).

Belongs to the asfivirus MGF 505 family.

Plays a role in virus cell tropism, and may be required for efficient virus replication in macrophages. This chain is Protein MGF 505-9R, found in Ornithodoros (relapsing fever ticks).